The following is a 181-amino-acid chain: Adenylyl-sulfate kinase (181 aa).

12 to 19 (GLSGAGKS) lines the ATP pocket. Catalysis depends on serine 86, which acts as the Phosphoserine intermediate.

The protein belongs to the APS kinase family.

The enzyme catalyses adenosine 5'-phosphosulfate + ATP = 3'-phosphoadenylyl sulfate + ADP + H(+). Its pathway is sulfur metabolism; hydrogen sulfide biosynthesis; sulfite from sulfate: step 2/3. Catalyzes the synthesis of activated sulfate. In Microcystis aeruginosa (strain NIES-843 / IAM M-2473), this protein is Adenylyl-sulfate kinase.